The primary structure comprises 438 residues: 23S rRNA (uracil(1939)-C(5))-methyltransferase RlmD (438 aa).

The TRAM domain maps to 9–68; that stretch reads RRTVNRHIITVTADNLDAQGQGVARHQGKTIFVAGLLPGEQAQVQLTEEKRQFAKAKLVK. Residues Cys-81, Cys-87, Cys-90, and Cys-168 each coordinate [4Fe-4S] cluster. 6 residues coordinate S-adenosyl-L-methionine: Gln-272, Phe-301, Asn-306, Glu-322, Asn-349, and Asp-370. Cys-396 acts as the Nucleophile in catalysis.

It belongs to the class I-like SAM-binding methyltransferase superfamily. RNA M5U methyltransferase family. RlmD subfamily.

It catalyses the reaction uridine(1939) in 23S rRNA + S-adenosyl-L-methionine = 5-methyluridine(1939) in 23S rRNA + S-adenosyl-L-homocysteine + H(+). Catalyzes the formation of 5-methyl-uridine at position 1939 (m5U1939) in 23S rRNA. The sequence is that of 23S rRNA (uracil(1939)-C(5))-methyltransferase RlmD from Photorhabdus laumondii subsp. laumondii (strain DSM 15139 / CIP 105565 / TT01) (Photorhabdus luminescens subsp. laumondii).